The chain runs to 1188 residues: DNA-directed RNA polymerase subunit beta (1188 aa).

The protein belongs to the RNA polymerase beta chain family. The RNAP catalytic core consists of 2 alpha, 1 beta, 1 beta' and 1 omega subunit. When a sigma factor is associated with the core the holoenzyme is formed, which can initiate transcription.

The catalysed reaction is RNA(n) + a ribonucleoside 5'-triphosphate = RNA(n+1) + diphosphate. In terms of biological role, DNA-dependent RNA polymerase catalyzes the transcription of DNA into RNA using the four ribonucleoside triphosphates as substrates. The sequence is that of DNA-directed RNA polymerase subunit beta from Streptococcus equi subsp. zooepidemicus (strain H70).